The chain runs to 160 residues: Phosphopantetheine adenylyltransferase (160 aa).

Thr-10 contacts substrate. Residues 10-11 (TF) and His-18 contribute to the ATP site. Substrate-binding residues include Lys-42, Met-74, and Arg-88. ATP contacts are provided by residues 89-91 (GVR), Glu-99, and 124-130 (WSYISST).

The protein belongs to the bacterial CoaD family. In terms of assembly, homohexamer. Mg(2+) is required as a cofactor.

It is found in the cytoplasm. It catalyses the reaction (R)-4'-phosphopantetheine + ATP + H(+) = 3'-dephospho-CoA + diphosphate. The protein operates within cofactor biosynthesis; coenzyme A biosynthesis; CoA from (R)-pantothenate: step 4/5. Its function is as follows. Reversibly transfers an adenylyl group from ATP to 4'-phosphopantetheine, yielding dephospho-CoA (dPCoA) and pyrophosphate. This Sodalis glossinidius (strain morsitans) protein is Phosphopantetheine adenylyltransferase.